Consider the following 307-residue polypeptide: MRYVVGHKNPDTDSIASAIVLAYFLDCYPARLGDINPETEFVLRKFGVMEPELIESAKGKEIILVDHSEKSQSFDDLEEGKLIAIIDHHKVGLTTTEPILYYAKPVGSTATVIAELYFKDAIDLIGGKKKELKPDLAGLLLSAIISDTVLFKSPTTTDLDKEMAKKLAEIAGISNIEEFGMEILKAKSVVGKLKPEEIINMDFKNFDFNGKKVGIGQVEVIDVSEVESKKEDIYKLLEEKLKNEGYDLIVFLITDIMKEGSEALVVGNKEMFEKAFNVKVEGNSVFLEGVMSRKKQVVPPLERAYNG.

Residues H7, D11, D13, D66, H88, and D147 each contribute to the Mn(2+) site.

Mn(2+) serves as cofactor.

The protein localises to the cytoplasm. The catalysed reaction is diphosphate + H2O = 2 phosphate + H(+). The sequence is that of Manganese-dependent inorganic pyrophosphatase (ppaC) from Methanocaldococcus jannaschii (strain ATCC 43067 / DSM 2661 / JAL-1 / JCM 10045 / NBRC 100440) (Methanococcus jannaschii).